The sequence spans 137 residues: Large ribosomal subunit protein uL16 (137 aa).

Residues 1–21 (MLSPKKVKFRKRQKGRLKGKA) show a composition bias toward basic residues. The segment at 1–22 (MLSPKKVKFRKRQKGRLKGKAQ) is disordered.

Belongs to the universal ribosomal protein uL16 family. As to quaternary structure, part of the 50S ribosomal subunit.

Binds 23S rRNA and is also seen to make contacts with the A and possibly P site tRNAs. The chain is Large ribosomal subunit protein uL16 from Maridesulfovibrio salexigens (strain ATCC 14822 / DSM 2638 / NCIMB 8403 / VKM B-1763) (Desulfovibrio salexigens).